The chain runs to 104 residues: MQTSRISSFFRGLVHLYRWAISPFLGAPCRFFPTCSEYALVALKKHPLRKSLFLIAKRLLKCGPWCIGGIDLVPRTSVEEYLSSPTPLAESPDDRTVPHTQETS.

Residues serine 83–serine 104 are disordered.

This sequence belongs to the UPF0161 family.

The protein resides in the cell inner membrane. In terms of biological role, could be involved in insertion of integral membrane proteins into the membrane. The sequence is that of Putative membrane protein insertion efficiency factor from Chlamydia trachomatis serovar D (strain ATCC VR-885 / DSM 19411 / UW-3/Cx).